Consider the following 127-residue polypeptide: Large ribosomal subunit protein bL19 (127 aa).

The protein belongs to the bacterial ribosomal protein bL19 family.

This protein is located at the 30S-50S ribosomal subunit interface and may play a role in the structure and function of the aminoacyl-tRNA binding site. In Jannaschia sp. (strain CCS1), this protein is Large ribosomal subunit protein bL19.